A 550-amino-acid chain; its full sequence is Chaperonin GroEL (550 aa).

ATP is bound by residues 30–33 (TLGP), Lys51, 87–91 (DGTTT), Gly415, 480–482 (NAA), and Asp496.

The protein belongs to the chaperonin (HSP60) family. In terms of assembly, forms a cylinder of 14 subunits composed of two heptameric rings stacked back-to-back. Interacts with the co-chaperonin GroES.

The protein localises to the cytoplasm. The catalysed reaction is ATP + H2O + a folded polypeptide = ADP + phosphate + an unfolded polypeptide.. Functionally, together with its co-chaperonin GroES, plays an essential role in assisting protein folding. The GroEL-GroES system forms a nano-cage that allows encapsulation of the non-native substrate proteins and provides a physical environment optimized to promote and accelerate protein folding. The polypeptide is Chaperonin GroEL (Variovorax paradoxus (strain S110)).